A 1504-amino-acid chain; its full sequence is NAC-alpha domain-containing protein 1 (1504 aa).

Disordered stretches follow at residues 127–150 (KPGARPQPEGASWDAGPSGAASAW), 208–261 (DREG…HGPH), 315–356 (PSDW…SSWS), 396–436 (LPQE…STSA), 460–525 (DTSA…TNSQ), 539–565 (GLESEAMRTPPDQQAAPGPQVEETPTV), 701–812 (VLPP…EEGV), 834–1064 (DLES…LPVA), 1099–1366 (PFQH…AMSK), and 1430–1467 (PSEPSALVPELSPGPRVRPECEEQEEEDEEVEEAGLEP). Over residues 342-354 (SSESSLSADSSSS) the composition is skewed to low complexity. Acidic residues predominate over residues 398-407 (QEEEEDEEDV). Low complexity-rich tracts occupy residues 408–422 (AATAAAAAPAAATPD) and 462–475 (SAASSDSDSASYAG). The span at 510–525 (STPQTSEQEICLTNSQ) shows a compositional bias: polar residues. A compositionally biased stretch (polar residues) spans 775-792 (PQESPTASSLTLQSSHPT). The span at 930–939 (PPASNQAQQN) shows a compositional bias: low complexity. A compositionally biased stretch (polar residues) spans 958–968 (STLSTKTSEPT). Residues 989–1005 (EAHDGVKTHSPQREALR) are compositionally biased toward basic and acidic residues. Position 998 is a phosphoserine (Ser998). Polar residues predominate over residues 1016 to 1031 (SPGQGNGPKSATSQGA). Over residues 1159–1171 (PGPPDPCLCPPPQ) the composition is skewed to pro residues. Polar residues predominate over residues 1213 to 1222 (VSLSPHSTLN). The residue at position 1268 (Ser1268) is a Phosphoserine. An NAC-A/B domain is found at 1354 to 1419 (SRSEKKARKA…AKIEDLSQQV (66 aa)). A compositionally biased stretch (acidic residues) spans 1451-1464 (EEQEEEDEEVEEAG).

It belongs to the NAC-alpha family.

The protein resides in the cytoplasm. It is found in the nucleus. In terms of biological role, may prevent inappropriate targeting of non-secretory polypeptides to the endoplasmic reticulum (ER). May bind to nascent polypeptide chains as they emerge from the ribosome and block their interaction with the signal recognition particle (SRP), which normally targets nascent secretory peptides to the ER. May also reduce the inherent affinity of ribosomes for protein translocation sites in the ER membrane (M sites). The polypeptide is NAC-alpha domain-containing protein 1 (Nacad) (Mus musculus (Mouse)).